The chain runs to 91 residues: MDPLGFFRNRPSYVVVFGIILLIVACICAYIELSKSGKPADSALRSISIISFILAILLLLGIILFSGYNRYCTGNVVDESRYATSPGTEIQ.

The Intravirion portion of the chain corresponds to Met1–Ser12. A helical membrane pass occupies residues Tyr13 to Leu33. Over Ser34–Ser46 the chain is Virion surface. A helical transmembrane segment spans residues Ile47–Gly67. Residues Tyr68 to Gln91 are Intravirion-facing.

Belongs to the chordopoxvirinae A14 family. Homodimer; disulfide-linked. Interacts with A17. Phosphorylated by viral F10 kinase, phosphorylation state is regulated by H1 phosphatase.

Its subcellular location is the virion membrane. Functionally, envelope protein which is a major component of the mature virion (MV) membrane. Essential for membrane biogenesis. Is required, together with A17, to form bona fide crescents, which can progress to form the immature virion (IV) membrane. A14 and A17 form a lattice that is stabilized by disulfide bonds and serves as an anchor within the viral membrane to which several other proteins important in virion structure and morphogenesis attach. The polypeptide is Virion membrane protein A14 homolog (Fowlpox virus (strain NVSL) (FPV)).